Here is a 122-residue protein sequence, read N- to C-terminus: Large ribosomal subunit protein uL14 (122 aa).

The protein belongs to the universal ribosomal protein uL14 family. In terms of assembly, part of the 50S ribosomal subunit. Forms a cluster with proteins L3 and L19. In the 70S ribosome, L14 and L19 interact and together make contacts with the 16S rRNA in bridges B5 and B8.

Functionally, binds to 23S rRNA. Forms part of two intersubunit bridges in the 70S ribosome. This is Large ribosomal subunit protein uL14 from Desulfosudis oleivorans (strain DSM 6200 / JCM 39069 / Hxd3) (Desulfococcus oleovorans).